We begin with the raw amino-acid sequence, 102 residues long: Large ribosomal subunit protein bL21 (102 aa).

The protein belongs to the bacterial ribosomal protein bL21 family. As to quaternary structure, part of the 50S ribosomal subunit. Contacts protein L20.

In terms of biological role, this protein binds to 23S rRNA in the presence of protein L20. In Ehrlichia canis (strain Jake), this protein is Large ribosomal subunit protein bL21.